Here is a 74-residue protein sequence, read N- to C-terminus: Kappa-scoloptoxin(07)-Ssm2a (74 aa).

The first 19 residues, 1 to 19 (MLVFYALLFVTVFSNTVMG), serve as a signal peptide directing secretion. Positions 20-41 (ATIDKPIPKPILREAIEEIEVN) are excised as a propeptide.

Belongs to the scoloptoxin-07 family. In terms of processing, contains 3 disulfide bonds. In terms of tissue distribution, expressed by the venom gland.

The protein localises to the secreted. Its function is as follows. Toxin that inhibits voltage-gated potassium channel currents in DRG neurons (IC(50)=about 570 nM). In vivo, induces neurotoxicity shown by twitching, paralysis, and body contraction. In vivo, insects injected with this toxin showed signs of neurotoxicity including twitching, paralysis, and body contraction. The protein is Kappa-scoloptoxin(07)-Ssm2a of Scolopendra mutilans (Chinese red-headed centipede).